The chain runs to 68 residues: Small ribosomal subunit protein bS21 (68 aa).

A disordered region spans residues P39–E68. Over residues R54–E68 the composition is skewed to basic residues.

This sequence belongs to the bacterial ribosomal protein bS21 family.

In Orientia tsutsugamushi (strain Boryong) (Rickettsia tsutsugamushi), this protein is Small ribosomal subunit protein bS21.